Here is a 475-residue protein sequence, read N- to C-terminus: UDP-N-acetylmuramate--L-alanine ligase (475 aa).

125–131 (GTHGKTT) contacts ATP.

The protein belongs to the MurCDEF family.

It is found in the cytoplasm. The catalysed reaction is UDP-N-acetyl-alpha-D-muramate + L-alanine + ATP = UDP-N-acetyl-alpha-D-muramoyl-L-alanine + ADP + phosphate + H(+). Its pathway is cell wall biogenesis; peptidoglycan biosynthesis. Its function is as follows. Cell wall formation. In Actinobacillus pleuropneumoniae serotype 7 (strain AP76), this protein is UDP-N-acetylmuramate--L-alanine ligase.